Here is a 247-residue protein sequence, read N- to C-terminus: tRNA pseudouridine synthase A 1 (247 aa).

Catalysis depends on Asp53, which acts as the Nucleophile. Tyr111 contacts substrate.

This sequence belongs to the tRNA pseudouridine synthase TruA family. As to quaternary structure, homodimer.

It carries out the reaction uridine(38/39/40) in tRNA = pseudouridine(38/39/40) in tRNA. Formation of pseudouridine at positions 38, 39 and 40 in the anticodon stem and loop of transfer RNAs. This chain is tRNA pseudouridine synthase A 1, found in Bacillus cereus (strain ATCC 14579 / DSM 31 / CCUG 7414 / JCM 2152 / NBRC 15305 / NCIMB 9373 / NCTC 2599 / NRRL B-3711).